We begin with the raw amino-acid sequence, 162 residues long: D-aminoacyl-tRNA deacylase (162 aa).

The Gly-cisPro motif, important for rejection of L-amino acids motif lies at 143 to 144; it reads GP.

Belongs to the DTD family. In terms of assembly, homodimer.

The protein localises to the cytoplasm. The enzyme catalyses glycyl-tRNA(Ala) + H2O = tRNA(Ala) + glycine + H(+). It catalyses the reaction a D-aminoacyl-tRNA + H2O = a tRNA + a D-alpha-amino acid + H(+). Functionally, an aminoacyl-tRNA editing enzyme that deacylates mischarged D-aminoacyl-tRNAs. Also deacylates mischarged glycyl-tRNA(Ala), protecting cells against glycine mischarging by AlaRS. Acts via tRNA-based rather than protein-based catalysis; rejects L-amino acids rather than detecting D-amino acids in the active site. By recycling D-aminoacyl-tRNA to D-amino acids and free tRNA molecules, this enzyme counteracts the toxicity associated with the formation of D-aminoacyl-tRNA entities in vivo and helps enforce protein L-homochirality. The protein is D-aminoacyl-tRNA deacylase of Nitratidesulfovibrio vulgaris (strain ATCC 29579 / DSM 644 / CCUG 34227 / NCIMB 8303 / VKM B-1760 / Hildenborough) (Desulfovibrio vulgaris).